The primary structure comprises 357 residues: Protein RecA (357 aa).

Gly-67–Thr-74 is an ATP binding site. The tract at residues Leu-335–Phe-357 is disordered.

This sequence belongs to the RecA family.

It localises to the cytoplasm. In terms of biological role, can catalyze the hydrolysis of ATP in the presence of single-stranded DNA, the ATP-dependent uptake of single-stranded DNA by duplex DNA, and the ATP-dependent hybridization of homologous single-stranded DNAs. It interacts with LexA causing its activation and leading to its autocatalytic cleavage. This Shewanella putrefaciens (strain CN-32 / ATCC BAA-453) protein is Protein RecA.